Here is a 572-residue protein sequence, read N- to C-terminus: Proline--tRNA ligase (572 aa).

Belongs to the class-II aminoacyl-tRNA synthetase family. ProS type 1 subfamily. As to quaternary structure, homodimer.

The protein resides in the cytoplasm. It catalyses the reaction tRNA(Pro) + L-proline + ATP = L-prolyl-tRNA(Pro) + AMP + diphosphate. In terms of biological role, catalyzes the attachment of proline to tRNA(Pro) in a two-step reaction: proline is first activated by ATP to form Pro-AMP and then transferred to the acceptor end of tRNA(Pro). As ProRS can inadvertently accommodate and process non-cognate amino acids such as alanine and cysteine, to avoid such errors it has two additional distinct editing activities against alanine. One activity is designated as 'pretransfer' editing and involves the tRNA(Pro)-independent hydrolysis of activated Ala-AMP. The other activity is designated 'posttransfer' editing and involves deacylation of mischarged Ala-tRNA(Pro). The misacylated Cys-tRNA(Pro) is not edited by ProRS. This chain is Proline--tRNA ligase, found in Escherichia coli (strain K12 / MC4100 / BW2952).